A 1554-amino-acid chain; its full sequence is Lysine-specific demethylase 5C (1554 aa).

The region spanning 14-55 (CPVFEPSWAEFRDPLGYIAKIRPIAEKSGICKIRPPADWQPP) is the JmjN domain. Positions 79 to 169 (TRVKLNYLDQ…IVYPYEMYQS (91 aa)) constitute an ARID domain. Over residues 197-207 (LRQSVQPSKFN) the composition is skewed to polar residues. The segment at 197 to 227 (LRQSVQPSKFNSYGRRAKRLQPDPEPTEEDI) is disordered. Glycyl lysine isopeptide (Lys-Gly) (interchain with G-Cter in SUMO2) cross-links involve residues Lys205, Lys229, Lys244, and Lys274. The disordered stretch occupies residues 284 to 303 (ESTSPKTFLEGKEELSHSPE). At Ser287 the chain carries Phosphoserine. A Glycyl lysine isopeptide (Lys-Gly) (interchain with G-Cter in SUMO2) cross-link involves residue Lys295. Ser301 and Ser317 each carry phosphoserine. Residues 326–372 (VCRMCSRGDEDDKLLLCDGCDDNYHIFCLLPPLPEIPKGVWRCPKCV) form a PHD-type 1 zinc finger. The region spanning 468-634 (EYATSGWNLN…AGRQCIEHYR (167 aa)) is the JmjC domain. Positions 514, 517, and 602 each coordinate Fe cation. A phosphoserine mark is found at Ser893 and Ser897. A Glycyl lysine isopeptide (Lys-Gly) (interchain with G-Cter in SUMO2) cross-link involves residue Lys1127. The PHD-type 2 zinc-finger motif lies at 1187-1248 (ICVCGQVPAG…DTKFLCPLCM (62 aa)). Disordered regions lie at residues 1319-1364 (SKPE…EGSG) and 1437-1535 (AERH…APFS). Position 1353 is a phosphoserine (Ser1353). Over residues 1442–1457 (SRTRGRALERRRRRKV) the composition is skewed to basic residues. Positions 1458–1475 (DRGGEPDDPAREELEPKR) are enriched in basic and acidic residues. Positions 1482–1497 (EAEEVQEEEELEEETG) are enriched in acidic residues.

Belongs to the JARID1 histone demethylase family. As to quaternary structure, part of two distinct complexes, one containing E2F6, and the other containing REST. Interacts with ZMYND8. Fe(2+) serves as cofactor.

The protein resides in the nucleus. The catalysed reaction is N(6),N(6),N(6)-trimethyl-L-lysyl(4)-[histone H3] + 3 2-oxoglutarate + 3 O2 = L-lysyl(4)-[histone H3] + 3 formaldehyde + 3 succinate + 3 CO2. Its function is as follows. Histone demethylase that specifically demethylates 'Lys-4' of histone H3, thereby playing a central role in histone code. Does not demethylate histone H3 'Lys-9', H3 'Lys-27', H3 'Lys-36', H3 'Lys-79' or H4 'Lys-20'. Demethylates trimethylated and dimethylated but not monomethylated H3 'Lys-4'. Participates in transcriptional repression of neuronal genes by recruiting histone deacetylases and REST at neuron-restrictive silencer elements. Represses the CLOCK-BMAL1 heterodimer-mediated transcriptional activation of the core clock component PER2. The sequence is that of Lysine-specific demethylase 5C (Kdm5c) from Mus musculus (Mouse).